A 373-amino-acid polypeptide reads, in one-letter code: ASGVIKCKAAVAWEAGKPLSIEEIEVAPPKAHEVRVKIIATAVCHTDAYTLSGADPEGSFPVILGHEGAGIVESVGEGVTKFKPGDTVIPLYIPQCGECKFCLNPKTNLCQKIRVTQGKGVMPDGTSRFTCKGKQVLHFMGTSTFSEYTVVADISLTKINASAPLDKVCLLGCGVSTGYGAALNTAKVEPGSTCAVFGLGGVGLAVIMGCKVAGASRIIGIDLNKDKFAKAKEFGATECISPADFKKPIQEVLIEMTDGGVDYSFECIGNVGVMRAALEACHKGWGVSVIVGVAAAGQEIATRPFQLVTGRTWKGTAFGGWKSVESVPKLVDEYMSKKMKVDEFVTHTLPFEQINEAFELMHAGKSIRSVLKF.

Ala1 bears the N-acetylalanine mark. Zn(2+) is bound by residues Cys44, His66, Cys96, Cys99, Cys102, Cys110, and Cys173.

This sequence belongs to the zinc-containing alcohol dehydrogenase family. Class-III subfamily. Homodimer. Zn(2+) serves as cofactor.

It localises to the cytoplasm. It catalyses the reaction a primary alcohol + NAD(+) = an aldehyde + NADH + H(+). It carries out the reaction a secondary alcohol + NAD(+) = a ketone + NADH + H(+). The enzyme catalyses S-(hydroxymethyl)glutathione + NADP(+) = S-formylglutathione + NADPH + H(+). The catalysed reaction is S-(hydroxymethyl)glutathione + NAD(+) = S-formylglutathione + NADH + H(+). It catalyses the reaction S-nitrosoglutathione + NADH + H(+) = S-(hydroxysulfenamide)glutathione + NAD(+). Its function is as follows. Class-III ADH is remarkably ineffective in oxidizing ethanol, but it readily catalyzes the oxidation of long-chain primary alcohols and the oxidation of S-(hydroxymethyl) glutathione. Also acts as a S-nitroso-glutathione reductase by catalyzing the NADH-dependent reduction of S-nitrosoglutathione, thereby regulating protein S-nitrosylation. The sequence is that of Alcohol dehydrogenase class-3 from Saara hardwickii (Indian spiny-tailed lizard).